Consider the following 360-residue polypeptide: MDKFFDKLQAVADRYEELGELLSDPEVISDSQRFMKLSKEMGNIRETVEKYNHYKEVTSQIEENDELLHEKLDDEMNAMVKDDLKNLNAEKDQLEHEITLLMLPKDPNDDKNIIMEIHGAAGGDEASLFAADLFNMYSKYAERQGWQVEVADRNETEVGGFKEIVLIISGDKVYSKLKYESGAHRVQRVPVTESAGRVHTSTATVGVMPEAQDVDIDIDQKDIRTDVFRSSGAGGQHINKTSSAVRMTHLPTGIVVSMQDQRSQQQNRAKAMEILRARVYDYYQSREQNEYDAERKSAVGTGDRSERIRTYNFPQNRVTDHRIGLTLNKLDRVMNGELDEVIDALVLADQAEKMERLTNE.

Gln-236 carries the N5-methylglutamine modification.

The protein belongs to the prokaryotic/mitochondrial release factor family. Methylated by PrmC. Methylation increases the termination efficiency of RF1.

It localises to the cytoplasm. Its function is as follows. Peptide chain release factor 1 directs the termination of translation in response to the peptide chain termination codons UAG and UAA. This is Peptide chain release factor 1 from Lactiplantibacillus plantarum (strain ATCC BAA-793 / NCIMB 8826 / WCFS1) (Lactobacillus plantarum).